Reading from the N-terminus, the 412-residue chain is Tyrosine--tRNA ligase (412 aa).

Y31 serves as a coordination point for L-tyrosine. A 'HIGH' region motif is present at residues 36 to 45 (PTAPSLHIGH). Residues Y162 and Q166 each contribute to the L-tyrosine site. A 'KMSKS' region motif is present at residues 222–226 (KIGKT). K225 is an ATP binding site. Residues 345 to 412 (KRWLDVVVQL…KKKKQVIDLN (68 aa)) enclose the S4 RNA-binding domain.

The protein belongs to the class-I aminoacyl-tRNA synthetase family. TyrS type 1 subfamily. As to quaternary structure, homodimer.

The protein resides in the cytoplasm. The catalysed reaction is tRNA(Tyr) + L-tyrosine + ATP = L-tyrosyl-tRNA(Tyr) + AMP + diphosphate + H(+). Catalyzes the attachment of tyrosine to tRNA(Tyr) in a two-step reaction: tyrosine is first activated by ATP to form Tyr-AMP and then transferred to the acceptor end of tRNA(Tyr). This chain is Tyrosine--tRNA ligase, found in Chlamydia muridarum (strain MoPn / Nigg).